A 60-amino-acid chain; its full sequence is uncharacterized protein (60 aa).

Residues 19 to 39 traverse the membrane as a helical segment; it reads LSIMCGCSIYFLLLVFILTFY.

It is found in the membrane. This is an uncharacterized protein from Saccharomyces cerevisiae (strain ATCC 204508 / S288c) (Baker's yeast).